A 368-amino-acid polypeptide reads, in one-letter code: Cobalt-precorrin-5B C(1)-methyltransferase (368 aa).

The protein belongs to the CbiD family.

It catalyses the reaction Co-precorrin-5B + S-adenosyl-L-methionine = Co-precorrin-6A + S-adenosyl-L-homocysteine. Its pathway is cofactor biosynthesis; adenosylcobalamin biosynthesis; cob(II)yrinate a,c-diamide from sirohydrochlorin (anaerobic route): step 6/10. In terms of biological role, catalyzes the methylation of C-1 in cobalt-precorrin-5B to form cobalt-precorrin-6A. This Synechococcus sp. (strain CC9605) protein is Cobalt-precorrin-5B C(1)-methyltransferase.